The primary structure comprises 820 residues: Probable ATP-dependent RNA helicase DDX23 (820 aa).

Over residues M1 to K42 the composition is skewed to basic and acidic residues. The tract at residues M1–S244 is disordered. S14 and S16 each carry phosphoserine. Positions D43–S65 are enriched in basic residues. The segment covering K66 to R105 has biased composition (basic and acidic residues). Phosphoserine occurs at positions 107 and 109. Basic and acidic residues-rich tracts occupy residues R112–P137, L147–N226, and G233–S244. The short motif at R391 to R419 is the Q motif element. The Helicase ATP-binding domain occupies I422–V627. A435–T442 contacts ATP. A DEAD box motif is present at residues D549 to D552. In terms of domain architecture, Helicase C-terminal spans K651–P799. Glycyl lysine isopeptide (Lys-Gly) (interchain with G-Cter in SUMO2) cross-links involve residues K686 and K811.

Belongs to the DEAD box helicase family. DDX23/PRP28 subfamily. The phosphorylated form (by SRPK2) is a component of the U4/U6-U5 tri-snRNP complex composed of the U4, U6 and U5 snRNAs and at least PRPF3, PRPF4, PRPF6, PRPF8, PRPF31, SNRNP200, TXNL4A, WDR57, SNRNP40, DDX23, CD2BP2, PPIH, SNU13, EFTUD2, SART1 and USP39. Identified in the spliceosome C complex. Interacts with ERBB4. Interacts with ERCC6. In terms of processing, in vitro phosphorylated by CLK1 and U1 snRNP-associated protein kinase. Phosphorylated by SRPK2 and this phosphorylation is required for its association with the tri-snRNP (U4/U6-U5 tri-small nuclear ribonucleoproteins) and subsequent spliceosomal B complex formation. May be phosphorylated by SRPK2 on Ser residues in the SR domain; the phosphorylation is required for the removal of inappropriate R-loops during transcription.

It is found in the nucleus. It localises to the chromosome. The enzyme catalyses ATP + H2O = ADP + phosphate + H(+). Involved in pre-mRNA splicing and its phosphorylated form (by SRPK2) is required for spliceosomal B complex formation. Independently of its spliceosome formation function, required for the suppression of incorrect R-loops formed during transcription; R-loops are composed of a DNA:RNA hybrid and the associated non-template single-stranded DNA. The chain is Probable ATP-dependent RNA helicase DDX23 from Homo sapiens (Human).